Here is a 349-residue protein sequence, read N- to C-terminus: Anthranilate phosphoribosyltransferase (349 aa).

Residues G84, 87–88 (GD), T92, 94–97 (NIST), 112–120 (KHGNRAASS), and S124 contribute to the 5-phospho-alpha-D-ribose 1-diphosphate site. G84 lines the anthranilate pocket. S96 serves as a coordination point for Mg(2+). An anthranilate-binding site is contributed by N115. R170 provides a ligand contact to anthranilate. 2 residues coordinate Mg(2+): D228 and E229.

Belongs to the anthranilate phosphoribosyltransferase family. In terms of assembly, homodimer. The cofactor is Mg(2+).

The enzyme catalyses N-(5-phospho-beta-D-ribosyl)anthranilate + diphosphate = 5-phospho-alpha-D-ribose 1-diphosphate + anthranilate. It functions in the pathway amino-acid biosynthesis; L-tryptophan biosynthesis; L-tryptophan from chorismate: step 2/5. In terms of biological role, catalyzes the transfer of the phosphoribosyl group of 5-phosphorylribose-1-pyrophosphate (PRPP) to anthranilate to yield N-(5'-phosphoribosyl)-anthranilate (PRA). This Leifsonia xyli subsp. xyli (strain CTCB07) protein is Anthranilate phosphoribosyltransferase.